Here is a 187-residue protein sequence, read N- to C-terminus: 3'-5' DNA exonuclease Cap18 (187 aa).

Residues 9 to 173 (VSVDVETSGP…HDARYQAELF (165 aa)) enclose the Exonuclease domain. The Mg(2+) site is built by aspartate 12, methionine 25, histidine 160, and aspartate 165. Histidine 160 functions as the Proton donor/acceptor in the catalytic mechanism.

It belongs to the Cap18 exonuclease family. As to quaternary structure, homodimer.

Its function is as follows. Effector component of a CBASS antivirus system. CBASS (cyclic oligonucleotide-based antiphage signaling system) provides immunity against bacteriophage. The CD-NTase protein synthesizes cyclic nucleotides in response to infection; these serve as specific second messenger signals. The signals activate a diverse range of effectors, leading to bacterial cell death and thus abortive phage infection. A type III CBASS system. A sequence non-specific 3'-5' DNA exonuclease that preferentially degrades ssDNA with 3' overhangs or a mismatch at the 3' end. Expression of this CBASS system (Cap17-CapW-CdnC-Cap7-Cap6-Cap18-Cap19) in a susceptible E.coli (strain JP313) confers resistance to bacteriophage lambda cI--. This is 3'-5' DNA exonuclease Cap18 from Escherichia coli.